Reading from the N-terminus, the 139-residue chain is ATP synthase epsilon chain (139 aa).

It belongs to the ATPase epsilon chain family. F-type ATPases have 2 components, CF(1) - the catalytic core - and CF(0) - the membrane proton channel. CF(1) has five subunits: alpha(3), beta(3), gamma(1), delta(1), epsilon(1). CF(0) has three main subunits: a, b and c.

The protein resides in the cell inner membrane. Produces ATP from ADP in the presence of a proton gradient across the membrane. The sequence is that of ATP synthase epsilon chain from Salmonella arizonae (strain ATCC BAA-731 / CDC346-86 / RSK2980).